The chain runs to 269 residues: 5'-nucleotidase SurE (269 aa).

A divalent metal cation contacts are provided by aspartate 8, aspartate 9, serine 39, and asparagine 92.

This sequence belongs to the SurE nucleotidase family. A divalent metal cation is required as a cofactor.

The protein localises to the cytoplasm. It catalyses the reaction a ribonucleoside 5'-phosphate + H2O = a ribonucleoside + phosphate. Functionally, nucleotidase that shows phosphatase activity on nucleoside 5'-monophosphates. The polypeptide is 5'-nucleotidase SurE (Psychrobacter cryohalolentis (strain ATCC BAA-1226 / DSM 17306 / VKM B-2378 / K5)).